A 342-amino-acid polypeptide reads, in one-letter code: HTH-type transcriptional regulator GbpR (342 aa).

An HTH lysR-type domain is found at 16–73 (LKLRHLQLFVALDEHRNLHRAAASLTMSQPAASKLLGDLEESLGVTLFERHGRGVEPN). The segment at residues 33–52 (LHRAAASLTMSQPAASKLLG) is a DNA-binding region (H-T-H motif).

This sequence belongs to the LysR transcriptional regulatory family.

In terms of biological role, does not seem to be required for sbpA expression. The protein is HTH-type transcriptional regulator GbpR (gbpR) of Azospirillum brasilense.